Reading from the N-terminus, the 290-residue chain is Arylamine N-acetyltransferase, pineal gland isozyme NAT-3 (290 aa).

Catalysis depends on Cys-68, which acts as the Acyl-thioester intermediate. Residues His-107 and Asp-122 contribute to the active site.

The protein belongs to the arylamine N-acetyltransferase family.

The catalysed reaction is an arylamine + acetyl-CoA = an N-acetylarylamine + CoA. It carries out the reaction an N-hydroxyarylamine + acetyl-CoA = an N-acetoxyarylamine + CoA. Catalyzes the N- or O-acetylation of various arylamine and heterocyclic amine substrates, and participates in the detoxification of a plethora of hydrazine and arylamine drugs. The protein is Arylamine N-acetyltransferase, pineal gland isozyme NAT-3 of Gallus gallus (Chicken).